We begin with the raw amino-acid sequence, 528 residues long: Probable feruloyl esterase B-1 (528 aa).

Residues 1–19 form the signal peptide; it reads MMWWFLLIGLASAAATASS. 6 disulfide bridges follow: C29-C78, C64-C117, C190-C445, C259-C276, C285-C295, and C505-C527. N83 and N101 each carry an N-linked (GlcNAc...) asparagine glycan. The active-site Acyl-ester intermediate is S191. Positions 260, 263, 265, 267, and 269 each coordinate Ca(2+). Residues N286, N354, and N385 are each glycosylated (N-linked (GlcNAc...) asparagine). Residues D404 and H444 each act as charge relay system in the active site.

This sequence belongs to the tannase family.

It is found in the secreted. It carries out the reaction feruloyl-polysaccharide + H2O = ferulate + polysaccharide.. Involved in degradation of plant cell walls. Hydrolyzes the feruloyl-arabinose ester bond in arabinoxylans as well as the feruloyl-galactose and feruloyl-arabinose ester bonds in pectin. The sequence is that of Probable feruloyl esterase B-1 (faeB-1) from Aspergillus fumigatus (strain ATCC MYA-4609 / CBS 101355 / FGSC A1100 / Af293) (Neosartorya fumigata).